The sequence spans 457 residues: Gamma-aminobutyric acid receptor subunit gamma-4 (457 aa).

The signal sequence occupies residues 1-21 (MPAMVLLLCLALGPALRSARC). Topologically, residues 22 to 256 (ESTEEYDYDY…VSFDLSRRMG (235 aa)) are extracellular. Residues Asn35 and Asn112 are each glycosylated (N-linked (GlcNAc...) asparagine). Cys173 and Cys187 are disulfide-bonded. An N-linked (GlcNAc...) asparagine glycan is attached at Asn230. A run of 3 helical transmembrane segments spans residues 257 to 279 (YFAIQTYIPCILTVVLSWVSFWI), 283 to 305 (STPARTSLGITTVLTMTTLSTIS), and 317 to 339 (AMDLFVSVCFIFVFAALMEYATL). Over 340–433 (NYLVGNKKPL…VRIHISRLDS (94 aa)) the chain is Cytoplasmic. The helical transmembrane segment at 434-457 (YSRVFFPTAFLLFNIVYWIAYLYL) threads the bilayer.

The protein belongs to the ligand-gated ion channel (TC 1.A.9) family. Gamma-aminobutyric acid receptor (TC 1.A.9.5) subfamily. GABRG4 sub-subfamily. As to quaternary structure, generally pentameric. There are five types of GABA(A) receptor chains: alpha, beta, gamma, delta, and rho. Abundant in several brain regions, including the ectostriatum, nucleus rotundus and hyperstriatum ventrale.

Its subcellular location is the postsynaptic cell membrane. The protein localises to the cell membrane. Its function is as follows. GABA, the major inhibitory neurotransmitter in the vertebrate brain, mediates neuronal inhibition by binding to the GABA/benzodiazepine receptor and opening an integral chloride channel. This is Gamma-aminobutyric acid receptor subunit gamma-4 (GABRG4) from Gallus gallus (Chicken).